Reading from the N-terminus, the 824-residue chain is Disintegrin and metalloproteinase domain-containing protein 17 (824 aa).

The first 17 residues, 1–17 (MRQSLLFLTSVVPFVLA), serve as a signal peptide directing secretion. A propeptide spanning residues 18-214 (PRPPDDPGFG…PEELVHRVKR (197 aa)) is cleaved from the precursor. N-linked (GlcNAc...) asparagine glycans are attached at residues Asn-103, Asn-157, and Asn-174. Residues 182–189 (KVCGYLKV) carry the Cysteine switch motif. Cys-184 contacts Zn(2+). At 215-671 (RADPDPMKNT…NTFGKFLADN (457 aa)) the chain is on the extracellular side. One can recognise a Peptidase M12B domain in the interval 223–474 (NTCKLLVVAD…KAQECFQERS (252 aa)). Intrachain disulfides connect Cys-225/Cys-333, Cys-365/Cys-469, and Cys-423/Cys-453. A glycan (N-linked (GlcNAc...) asparagine) is linked at Asn-264. Zn(2+) is bound at residue His-405. Glu-406 is an active-site residue. Residues His-409 and His-415 each contribute to the Zn(2+) site. N-linked (GlcNAc...) asparagine glycosylation is found at Asn-452, Asn-498, Asn-539, and Asn-551. Positions 475 to 563 (NKVCGNSRVD…ECPPPGNAED (89 aa)) constitute a Disintegrin domain. 4 disulfide bridges follow: Cys-534-Cys-555, Cys-573-Cys-582, Cys-578-Cys-591, and Cys-593-Cys-600. N-linked (GlcNAc...) asparagine glycosylation is present at Asn-594. The segment at 603–671 (CCRDLSGRCV…NTFGKFLADN (69 aa)) is crambin-like. A helical membrane pass occupies residues 672-692 (IVGSVLVFSLIFWIPFSILVH). At 693-824 (CVDKKLDKQY…NRVDSKETEC (132 aa)) the chain is on the cytoplasmic side. Short sequence motifs (SH3-binding) lie at residues 731-738 (PAPQTPGR) and 741-748 (PAPVIPSA). Positions 732 to 824 (APQTPGRLQP…NRVDSKETEC (93 aa)) are disordered. At Thr-735 the chain carries Phosphothreonine; by MAPK14. Residues 741–752 (PAPVIPSAPAAP) show a composition bias toward low complexity. The residue at position 761 (Thr-761) is a Phosphothreonine. At Ser-767 the chain carries Phosphoserine. Composition is skewed to basic and acidic residues over residues 768–781 (TDSH…EKDP), 791–807 (SFED…EKAA), and 815–824 (NRVDSKETEC). Ser-791 and Ser-819 each carry phosphoserine.

As to quaternary structure, interacts with MAD2L1, MAPK14 and MUC1. Interacts with iRhom1/RHBDF1 and iRhom2/RHBDF2. Interacts with FRMD8 via its interaction with iRhom1/RHBDF1 and iRhom2/RHBDF2. Interacts with TSPAN8. It depends on Zn(2+) as a cofactor. In terms of processing, the precursor is cleaved by a furin endopeptidase. Post-translationally, phosphorylated. Stimulation by growth factor or phorbol 12-myristate 13-acetate induces phosphorylation of Ser-819 but decreases phosphorylation of Ser-791. Phosphorylation at Thr-735 by MAPK14 is required for ADAM17-mediated ectodomain shedding. In terms of tissue distribution, ubiquitously expressed. Expressed at highest levels in adult heart, placenta, skeletal muscle, pancreas, spleen, thymus, prostate, testes, ovary and small intestine, and in fetal brain, lung, liver and kidney. Expressed in natural killer cells (at protein level).

The protein localises to the cell membrane. The enzyme catalyses Narrow endopeptidase specificity. Cleaves Pro-Leu-Ala-Gln-Ala-|-Val-Arg-Ser-Ser-Ser in the membrane-bound, 26-kDa form of tumor necrosis factor alpha (TNFalpha). Similarly cleaves other membrane-anchored, cell-surface proteins to 'shed' the extracellular domains.. Transmembrane metalloprotease which mediates the ectodomain shedding of a myriad of transmembrane proteins including adhesion proteins, growth factor precursors and cytokines important for inflammation and immunity. Cleaves the membrane-bound precursor of TNF-alpha to its mature soluble form. Responsible for the proteolytical release of soluble JAM3 from endothelial cells surface. Responsible for the proteolytic release of several other cell-surface proteins, including p75 TNF-receptor, interleukin 1 receptor type II, p55 TNF-receptor, transforming growth factor-alpha, L-selectin, growth hormone receptor, MUC1 and the amyloid precursor protein. Acts as an activator of Notch pathway by mediating cleavage of Notch, generating the membrane-associated intermediate fragment called Notch extracellular truncation (NEXT). Plays a role in the proteolytic processing of ACE2. Plays a role in hemostasis through shedding of GP1BA, the platelet glycoprotein Ib alpha chain. Mediates the proteolytic cleavage of LAG3, leading to release the secreted form of LAG3. Mediates the proteolytic cleavage of IL6R, leading to the release of secreted form of IL6R. Mediates the proteolytic cleavage and shedding of FCGR3A upon NK cell stimulation, a mechanism that allows for increased NK cell motility and detachment from opsonized target cells. Cleaves TREM2, resulting in shedding of the TREM2 ectodomain. The polypeptide is Disintegrin and metalloproteinase domain-containing protein 17 (Homo sapiens (Human)).